The following is a 316-amino-acid chain: Pantothenate kinase (316 aa).

95 to 102 (GSVAVGKS) serves as a coordination point for ATP.

This sequence belongs to the prokaryotic pantothenate kinase family.

The protein localises to the cytoplasm. The enzyme catalyses (R)-pantothenate + ATP = (R)-4'-phosphopantothenate + ADP + H(+). It functions in the pathway cofactor biosynthesis; coenzyme A biosynthesis; CoA from (R)-pantothenate: step 1/5. This is Pantothenate kinase from Shigella boydii serotype 18 (strain CDC 3083-94 / BS512).